The primary structure comprises 458 residues: Light-independent protochlorophyllide reductase subunit N (458 aa).

[4Fe-4S] cluster-binding residues include cysteine 22, cysteine 47, and cysteine 107.

Belongs to the BchN/ChlN family. Protochlorophyllide reductase is composed of three subunits; ChlL, ChlN and ChlB. Forms a heterotetramer of two ChlB and two ChlN subunits. It depends on [4Fe-4S] cluster as a cofactor.

It localises to the plastid. Its subcellular location is the chloroplast. The enzyme catalyses chlorophyllide a + oxidized 2[4Fe-4S]-[ferredoxin] + 2 ADP + 2 phosphate = protochlorophyllide a + reduced 2[4Fe-4S]-[ferredoxin] + 2 ATP + 2 H2O. The protein operates within porphyrin-containing compound metabolism; chlorophyll biosynthesis (light-independent). Its function is as follows. Component of the dark-operative protochlorophyllide reductase (DPOR) that uses Mg-ATP and reduced ferredoxin to reduce ring D of protochlorophyllide (Pchlide) to form chlorophyllide a (Chlide). This reaction is light-independent. The NB-protein (ChlN-ChlB) is the catalytic component of the complex. The chain is Light-independent protochlorophyllide reductase subunit N from Chaetosphaeridium globosum (Charophycean green alga).